The sequence spans 356 residues: Holliday junction branch migration complex subunit RuvB (356 aa).

The span at 1-14 (MAIVSSITNHSSLP) shows a compositional bias: polar residues. Residues 1–20 (MAIVSSITNHSSLPNDKGEE) form a disordered region. Residues 13–201 (LPNDKGEERL…FGITQRLDFY (189 aa)) form a large ATPase domain (RuvB-L) region. Positions 40, 41, 82, 85, 86, 87, 191, 201, and 238 each coordinate ATP. Threonine 86 provides a ligand contact to Mg(2+). Residues 202-273 (NYLDLENIIK…VVNDALDLHR (72 aa)) are small ATPAse domain (RuvB-S). The head domain (RuvB-H) stretch occupies residues 276 to 356 (QRGLDATDRS…LLTSPNNIDK (81 aa)). DNA-binding residues include arginine 331 and arginine 336.

It belongs to the RuvB family. As to quaternary structure, homohexamer. Forms an RuvA(8)-RuvB(12)-Holliday junction (HJ) complex. HJ DNA is sandwiched between 2 RuvA tetramers; dsDNA enters through RuvA and exits via RuvB. An RuvB hexamer assembles on each DNA strand where it exits the tetramer. Each RuvB hexamer is contacted by two RuvA subunits (via domain III) on 2 adjacent RuvB subunits; this complex drives branch migration. In the full resolvosome a probable DNA-RuvA(4)-RuvB(12)-RuvC(2) complex forms which resolves the HJ.

The protein localises to the cytoplasm. It carries out the reaction ATP + H2O = ADP + phosphate + H(+). In terms of biological role, the RuvA-RuvB-RuvC complex processes Holliday junction (HJ) DNA during genetic recombination and DNA repair, while the RuvA-RuvB complex plays an important role in the rescue of blocked DNA replication forks via replication fork reversal (RFR). RuvA specifically binds to HJ cruciform DNA, conferring on it an open structure. The RuvB hexamer acts as an ATP-dependent pump, pulling dsDNA into and through the RuvAB complex. RuvB forms 2 homohexamers on either side of HJ DNA bound by 1 or 2 RuvA tetramers; 4 subunits per hexamer contact DNA at a time. Coordinated motions by a converter formed by DNA-disengaged RuvB subunits stimulates ATP hydrolysis and nucleotide exchange. Immobilization of the converter enables RuvB to convert the ATP-contained energy into a lever motion, pulling 2 nucleotides of DNA out of the RuvA tetramer per ATP hydrolyzed, thus driving DNA branch migration. The RuvB motors rotate together with the DNA substrate, which together with the progressing nucleotide cycle form the mechanistic basis for DNA recombination by continuous HJ branch migration. Branch migration allows RuvC to scan DNA until it finds its consensus sequence, where it cleaves and resolves cruciform DNA. The chain is Holliday junction branch migration complex subunit RuvB from Prochlorococcus marinus (strain NATL2A).